Consider the following 282-residue polypeptide: Pantothenate synthetase (282 aa).

Position 26-33 (Met26–His33) interacts with ATP. The active-site Proton donor is the His33. (R)-pantoate is bound at residue Gln57. Residue Gln57 participates in beta-alanine binding. An ATP-binding site is contributed by Gly144–Asp147. Gln150 is a (R)-pantoate binding site. Residues Val173 and Leu181 to Arg184 contribute to the ATP site.

It belongs to the pantothenate synthetase family. As to quaternary structure, homodimer.

The protein resides in the cytoplasm. The catalysed reaction is (R)-pantoate + beta-alanine + ATP = (R)-pantothenate + AMP + diphosphate + H(+). The protein operates within cofactor biosynthesis; (R)-pantothenate biosynthesis; (R)-pantothenate from (R)-pantoate and beta-alanine: step 1/1. In terms of biological role, catalyzes the condensation of pantoate with beta-alanine in an ATP-dependent reaction via a pantoyl-adenylate intermediate. In Cupriavidus taiwanensis (strain DSM 17343 / BCRC 17206 / CCUG 44338 / CIP 107171 / LMG 19424 / R1) (Ralstonia taiwanensis (strain LMG 19424)), this protein is Pantothenate synthetase.